The sequence spans 170 residues: MERRYVPVADVARPHGVQGELRLRLYNEASDLLLTRPPIRLRLPDGSARDAKIVATRPVDKALLVRIAGIDDRDAAEALRGATVCVPRDAFAPLSEGEFYACDVEGARVMTPDGDLLGHVRSLQSYPTCDVLVVERQGADSIEVPLTESFVSSVDAERQVVQLATLEGLV.

The PRC barrel domain occupies Glu96 to Leu169.

It belongs to the RimM family. Binds ribosomal protein uS19.

The protein resides in the cytoplasm. Its function is as follows. An accessory protein needed during the final step in the assembly of 30S ribosomal subunit, possibly for assembly of the head region. Essential for efficient processing of 16S rRNA. May be needed both before and after RbfA during the maturation of 16S rRNA. It has affinity for free ribosomal 30S subunits but not for 70S ribosomes. The sequence is that of Ribosome maturation factor RimM from Sorangium cellulosum (strain So ce56) (Polyangium cellulosum (strain So ce56)).